The sequence spans 329 residues: Replication factor C small subunit (329 aa).

Glycine 51–threonine 58 contacts ATP.

Belongs to the activator 1 small subunits family. RfcS subfamily. In terms of assembly, heteromultimer composed of small subunits (RfcS) and large subunits (RfcL).

Functionally, part of the RFC clamp loader complex which loads the PCNA sliding clamp onto DNA. The protein is Replication factor C small subunit of Staphylothermus marinus (strain ATCC 43588 / DSM 3639 / JCM 9404 / F1).